Consider the following 529-residue polypeptide: Kunitz-type protease inhibitor 1 (529 aa).

A signal peptide spans Met-1–Ala-35. The MANSC domain occupies Gly-57–Tyr-140. Asn-66 and Asn-235 each carry an N-linked (GlcNAc...) asparagine glycan. The 51-residue stretch at Cys-250 to Cys-300 folds into the BPTI/Kunitz inhibitor 1 domain. 9 cysteine pairs are disulfide-bonded: Cys-250/Cys-300, Cys-259/Cys-283, Cys-275/Cys-296, Cys-335/Cys-347, Cys-342/Cys-360, Cys-354/Cys-369, Cys-391/Cys-441, Cys-400/Cys-424, and Cys-416/Cys-437. Positions Thr-334–Glu-370 constitute an LDL-receptor class A domain. The region spanning Cys-391–Cys-441 is the BPTI/Kunitz inhibitor 2 domain. N-linked (GlcNAc...) asparagine glycosylation is present at Asn-523.

Interacts with HGFAC. Interacts with TMPRSS13; the interaction promotes the phosphorylation and cell membrane localization of TMPRSS13.

It localises to the secreted. Its subcellular location is the cytoplasm. The protein localises to the cell membrane. Its function is as follows. Inhibitor of HGFAC. Inhibits serine protease activity of ST14/matriptase in vitro. Inhibits serine protease activity of TMPRSS13, via the BPTI/Kunitz inhibitor 1 domain. In Homo sapiens (Human), this protein is Kunitz-type protease inhibitor 1 (SPINT1).